We begin with the raw amino-acid sequence, 578 residues long: MKASRFFIGTLKEAPADAEIVSHKLMVRAGMIRRVAGGIYNYLPIGLRSIRKVEAIVREEMNRAGAIELLMPAVQPAELWQESGRWEKYGPELLRFKDRKQSDFVIGPTHEEVVTDIARGQIKSYRQLPVNFYQVQTKFRDEIRPRFGVMRGREFIMKDAYSFDKDMDGLRESYRKMYDAYVRIFTRLGLDFRAVAADNGSIGGSGSHEFHVIADTGEDDIAYCPTSDFASNVEAAEALPLIAERAAPKEELRKTSTPGKAKCEAVAEHLNIPLEKTIKSIILATENEGAEPTIWLLMLRGDHDLNEIKVNKLPGLGEFRFATEEEIVEWFGTPPGYLGPLNTKKPIKVIADRTVANMSDFVVGTNEVDFHTTGVNWGRDLPEPVVADIRNVKKDDPSPDGKGVIDICRGIEVGHVFQLGTKYSEAMNATFLDESGKPQPMQMGCYGIGITRILGAAIEQNFDDKGIIWPESIAPFEVVLCPMGYDRSDAVREQADKLHDELTAAGIDVILDDRGERPGVMFADWELIGVPHRLVIGERGLKDGKIEYQGRRDAEATLLPVEAAAQAVIDKIHAALAR.

It belongs to the class-II aminoacyl-tRNA synthetase family. ProS type 1 subfamily. In terms of assembly, homodimer.

The protein localises to the cytoplasm. The enzyme catalyses tRNA(Pro) + L-proline + ATP = L-prolyl-tRNA(Pro) + AMP + diphosphate. Functionally, catalyzes the attachment of proline to tRNA(Pro) in a two-step reaction: proline is first activated by ATP to form Pro-AMP and then transferred to the acceptor end of tRNA(Pro). As ProRS can inadvertently accommodate and process non-cognate amino acids such as alanine and cysteine, to avoid such errors it has two additional distinct editing activities against alanine. One activity is designated as 'pretransfer' editing and involves the tRNA(Pro)-independent hydrolysis of activated Ala-AMP. The other activity is designated 'posttransfer' editing and involves deacylation of mischarged Ala-tRNA(Pro). The misacylated Cys-tRNA(Pro) is not edited by ProRS. The protein is Proline--tRNA ligase of Paraburkholderia phymatum (strain DSM 17167 / CIP 108236 / LMG 21445 / STM815) (Burkholderia phymatum).